A 603-amino-acid polypeptide reads, in one-letter code: Elongation factor 4 (603 aa).

Residues 5–187 (RHIRNFCIIA…AVVNFVPPPK (183 aa)) enclose the tr-type G domain. Residues 17-22 (DHGKST) and 134-137 (NKID) contribute to the GTP site.

It belongs to the TRAFAC class translation factor GTPase superfamily. Classic translation factor GTPase family. LepA subfamily.

It is found in the cell membrane. It carries out the reaction GTP + H2O = GDP + phosphate + H(+). In terms of biological role, required for accurate and efficient protein synthesis under certain stress conditions. May act as a fidelity factor of the translation reaction, by catalyzing a one-codon backward translocation of tRNAs on improperly translocated ribosomes. Back-translocation proceeds from a post-translocation (POST) complex to a pre-translocation (PRE) complex, thus giving elongation factor G a second chance to translocate the tRNAs correctly. Binds to ribosomes in a GTP-dependent manner. The protein is Elongation factor 4 of Symbiobacterium thermophilum (strain DSM 24528 / JCM 14929 / IAM 14863 / T).